Here is a 165-residue protein sequence, read N- to C-terminus: Small ribosomal subunit protein uS5 (165 aa).

One can recognise an S5 DRBM domain in the interval 10 to 73; the sequence is LKEKVVFINR…EDAKKNLVEV (64 aa).

The protein belongs to the universal ribosomal protein uS5 family. In terms of assembly, part of the 30S ribosomal subunit. Contacts proteins S4 and S8.

In terms of biological role, with S4 and S12 plays an important role in translational accuracy. Functionally, located at the back of the 30S subunit body where it stabilizes the conformation of the head with respect to the body. The polypeptide is Small ribosomal subunit protein uS5 (Clostridium acetobutylicum (strain ATCC 824 / DSM 792 / JCM 1419 / IAM 19013 / LMG 5710 / NBRC 13948 / NRRL B-527 / VKM B-1787 / 2291 / W)).